The chain runs to 73 residues: UPF0235 protein SYO3AOP1_0257 (73 aa).

Belongs to the UPF0235 family.

The sequence is that of UPF0235 protein SYO3AOP1_0257 from Sulfurihydrogenibium sp. (strain YO3AOP1).